The chain runs to 643 residues: Fructose-1,6-bisphosphatase class 3 (643 aa).

The protein belongs to the FBPase class 3 family. Mn(2+) serves as cofactor.

The catalysed reaction is beta-D-fructose 1,6-bisphosphate + H2O = beta-D-fructose 6-phosphate + phosphate. The protein operates within carbohydrate biosynthesis; gluconeogenesis. This is Fructose-1,6-bisphosphatase class 3 from Lacticaseibacillus paracasei (strain ATCC 334 / BCRC 17002 / CCUG 31169 / CIP 107868 / KCTC 3260 / NRRL B-441) (Lactobacillus paracasei).